Consider the following 144-residue polypeptide: 3-dehydroquinate dehydratase (144 aa).

Tyr-23 acts as the Proton acceptor in catalysis. 3 residues coordinate substrate: Asn-74, His-80, and Asp-87. The Proton donor role is filled by His-101. Substrate-binding positions include 102 to 103 (LS) and Arg-112.

Belongs to the type-II 3-dehydroquinase family. As to quaternary structure, homododecamer.

The catalysed reaction is 3-dehydroquinate = 3-dehydroshikimate + H2O. It participates in metabolic intermediate biosynthesis; chorismate biosynthesis; chorismate from D-erythrose 4-phosphate and phosphoenolpyruvate: step 3/7. Catalyzes a trans-dehydration via an enolate intermediate. The polypeptide is 3-dehydroquinate dehydratase (Mesorhizobium japonicum (strain LMG 29417 / CECT 9101 / MAFF 303099) (Mesorhizobium loti (strain MAFF 303099))).